Here is a 486-residue protein sequence, read N- to C-terminus: Glutamate--tRNA ligase 2 (486 aa).

The 'HIGH' region signature appears at 12-22 (PSPTGELHIGN). A 'KMSKS' region motif is present at residues 252 to 256 (KLSKR). Lysine 255 lines the ATP pocket.

Belongs to the class-I aminoacyl-tRNA synthetase family. Glutamate--tRNA ligase type 1 subfamily. In terms of assembly, monomer.

It is found in the cytoplasm. The catalysed reaction is tRNA(Glu) + L-glutamate + ATP = L-glutamyl-tRNA(Glu) + AMP + diphosphate. Functionally, catalyzes the attachment of glutamate to tRNA(Glu) in a two-step reaction: glutamate is first activated by ATP to form Glu-AMP and then transferred to the acceptor end of tRNA(Glu). This is Glutamate--tRNA ligase 2 from Syntrophus aciditrophicus (strain SB).